We begin with the raw amino-acid sequence, 863 residues long: Glycogen phosphorylase (863 aa).

Lysine 618 carries the post-translational modification N6-(pyridoxal phosphate)lysine.

Belongs to the glycogen phosphorylase family. Pyridoxal 5'-phosphate serves as cofactor.

It catalyses the reaction [(1-&gt;4)-alpha-D-glucosyl](n) + phosphate = [(1-&gt;4)-alpha-D-glucosyl](n-1) + alpha-D-glucose 1-phosphate. Functionally, phosphorylase is an important allosteric enzyme in carbohydrate metabolism. Enzymes from different sources differ in their regulatory mechanisms and in their natural substrates. However, all known phosphorylases share catalytic and structural properties. This is Glycogen phosphorylase (glgP) from Mycobacterium tuberculosis (strain CDC 1551 / Oshkosh).